The chain runs to 68 residues: Riparin-1.5 amide (68 aa).

A signal peptide spans 1–15 (MKIIVVLAVLMLVSA). Residues 16–41 (QVCLVSAAEMGHSSDNELSSRDLVKR) constitute a propeptide that is removed on maturation. C47 and C53 are oxidised to a cystine. C53 is modified (cysteine amide). The propeptide occupies 57 to 68 (SIESSEGANGGE).

Expressed by the skin glands.

The protein localises to the secreted. The polypeptide is Riparin-1.5 amide (Crinia riparia (Streambank froglet)).